The primary structure comprises 247 residues: Transcription factor otaR1 (247 aa).

Disordered stretches follow at residues 1-48 (MEPA…ETSM) and 100-143 (DNAS…PLGN). Low complexity predominate over residues 23 to 47 (DESSSTGLSLGSLLSSSNDLSSETS). Residues 134–143 (ANPTSVPLGN) show a composition bias toward polar residues. Residues 156-196 (KKYHEKYKERNRVAAGKSRQKQVDLIELLQAEQREEERRRK) form a basic motif region. The bZIP domain maps to 156-219 (KKYHEKYKER…LDLKQELQHH (64 aa)). Positions 198–212 (LERELSQIHKELLDL) are leucine-zipper.

Its subcellular location is the nucleus. Its function is as follows. Transcription factor; part of the gene cluster that mediates the biosynthesis of ochratoxin A (OTA), a mycotoxin demonstrated to have nephrotoxic, immunotoxic, genotoxic, neurotoxic, and teratogenic properties. Positively regulates the expression of the cluster genes otaA, otaB, otaC and otaD, and the subsequent production of OTA. This Aspergillus carbonarius (strain ITEM 5010) protein is Transcription factor otaR1.